The primary structure comprises 308 residues: Bacitracin transport ATP-binding protein BcrA (308 aa).

Residues 8-236 (IETENLTKQY…NRKYTEFDVS (229 aa)) form the ABC transporter domain. Residue 40 to 47 (GRNGAGKT) coordinates ATP.

It belongs to the ABC transporter superfamily. In terms of assembly, the complex is probably composed of two ATP-binding proteins (BcrA) and two transmembrane proteins (BcrB).

Its function is as follows. Essential for high-level bacitracin resistance. Part of the ABC transporter complex BcrAB. Probably responsible for energy coupling to the transport system. The sequence is that of Bacitracin transport ATP-binding protein BcrA from Enterococcus faecalis (Streptococcus faecalis).